The primary structure comprises 440 residues: Guanine/hypoxanthine permease PbuG (440 aa).

13 helical membrane passes run 18-38, 57-77, 81-101, 107-127, 142-162, 175-195, 201-221, 251-271, 291-311, 327-347, 354-374, 388-408, and 419-439; these read IIGG…NPIT, AVFT…GLIA, IAIA…VLGM, AALS…LTGF, AVGA…SGII, IHSG…ILMV, GVFI…LVPV, MLIV…GTLV, ALLA…STTT, GFAA…SPLL, VTAP…GKIA, MIMM…FIFY, and KEVH…FIFL.

Belongs to the nucleobase:cation symporter-2 (NCS2) (TC 2.A.40) family. Azg-like subfamily.

The protein localises to the cell membrane. Functionally, involved in the uptake of the purine bases hypoxanthine and guanine. In Bacillus subtilis (strain 168), this protein is Guanine/hypoxanthine permease PbuG (pbuG).